The primary structure comprises 156 residues: MSKKKKKSPGTLAENRKARHDYNIEDTIEAGIVLRGTEIKSIRRGSANLKDSFAQVKNGEIYVHNMHIAPYEEGNRFNHDPLRPRKLLLHKREIEKLGTRTREIGYSIIPLKLYLKHGVCKVLIGVARGKKKYDKRQDLKDKAVKRDMQRAMKDRY.

This sequence belongs to the SmpB family.

It localises to the cytoplasm. Required for rescue of stalled ribosomes mediated by trans-translation. Binds to transfer-messenger RNA (tmRNA), required for stable association of tmRNA with ribosomes. tmRNA and SmpB together mimic tRNA shape, replacing the anticodon stem-loop with SmpB. tmRNA is encoded by the ssrA gene; the 2 termini fold to resemble tRNA(Ala) and it encodes a 'tag peptide', a short internal open reading frame. During trans-translation Ala-aminoacylated tmRNA acts like a tRNA, entering the A-site of stalled ribosomes, displacing the stalled mRNA. The ribosome then switches to translate the ORF on the tmRNA; the nascent peptide is terminated with the 'tag peptide' encoded by the tmRNA and targeted for degradation. The ribosome is freed to recommence translation, which seems to be the essential function of trans-translation. The sequence is that of SsrA-binding protein from Staphylococcus carnosus (strain TM300).